Reading from the N-terminus, the 300-residue chain is Protein N-terminal and lysine N-methyltransferase EFM7 (300 aa).

S-adenosyl-L-methionine contacts are provided by residues Trp-75, 101–103 (GAG), Asp-123, Trp-156, and Ser-179.

This sequence belongs to the class I-like SAM-binding methyltransferase superfamily. EFM7 family.

It is found in the cytoplasm. Functionally, S-adenosyl-L-methionine-dependent protein methyltransferase that trimethylates the N-terminal glycine 'Gly-2' of elongation factor 1-alpha, before also catalyzing the mono- and dimethylation of 'Lys-3'. In Cryptococcus neoformans var. neoformans serotype D (strain JEC21 / ATCC MYA-565) (Filobasidiella neoformans), this protein is Protein N-terminal and lysine N-methyltransferase EFM7.